A 342-amino-acid polypeptide reads, in one-letter code: MSINIEQAIIHEISQDSQGQLRCRLRPQPLLNGQAVEVMLDELHQTYTSKAGKGFGYFGIHGDDGEANPAFANALTQYRAGELGFVEFSGQASKLLQEELAKYDFSQGGFLLMSCYTSITSDYLFVALLSAKSSMTVLDDMELSQNNHLDLNNIQLAARIDLSEWQADKDSRKYISFIRGRAGRKVADFFLDFMGCVEGVNTKAQNKTLMNAVEDFVASSDLTKDERQQCRNKVFEYCSERFDEGADIEIKDLADELADQGMDSFYDFARGGSYDLDEEFPADKSTLRQLKKFSGTGGGVTLSFDGGHLGQRVIYDPISDTILIKGVPANLKDQLDRRLKGE.

Belongs to the YejK family.

It localises to the cytoplasm. It is found in the nucleoid. The chain is Nucleoid-associated protein Sputcn32_2288 from Shewanella putrefaciens (strain CN-32 / ATCC BAA-453).